Consider the following 159-residue polypeptide: Eukaryotic translation initiation factor 5A-2 (159 aa).

Residues 1 to 10 (MSDEEHHFEP) are compositionally biased toward basic and acidic residues. The segment at 1 to 21 (MSDEEHHFEPAADAGASKTYP) is disordered. At K52 the chain carries Hypusine.

Belongs to the eIF-5A family. Post-translationally, lys-52 undergoes hypusination, a unique post-translational modification that consists in the addition of a butylamino group from spermidine to lysine side chain, leading to the formation of the unusual amino acid hypusine. eIF-5As are the only known proteins to undergo this modification, which is essential for their function.

Translation factor that promotes translation elongation and termination, particularly upon ribosome stalling at specific amino acid sequence contexts. Binds between the exit (E) and peptidyl (P) site of the ribosome and promotes rescue of stalled ribosome: specifically required for efficient translation of polyproline-containing peptides as well as other motifs that stall the ribosome. Acts as a ribosome quality control (RQC) cofactor by joining the RQC complex to facilitate peptidyl transfer during CAT tailing step. The chain is Eukaryotic translation initiation factor 5A-2 from Medicago sativa (Alfalfa).